The following is a 76-amino-acid chain: Acyl carrier protein (76 aa).

Residues 2–76 enclose the Carrier domain; it reads SSIFDKVKAI…SAVEYIKENQ (75 aa). Serine 36 is modified (O-(pantetheine 4'-phosphoryl)serine).

This sequence belongs to the acyl carrier protein (ACP) family. Post-translationally, 4'-phosphopantetheine is transferred from CoA to a specific serine of apo-ACP by AcpS. This modification is essential for activity because fatty acids are bound in thioester linkage to the sulfhydryl of the prosthetic group.

It is found in the cytoplasm. Its pathway is lipid metabolism; fatty acid biosynthesis. Functionally, carrier of the growing fatty acid chain in fatty acid biosynthesis. This chain is Acyl carrier protein, found in Heliobacterium modesticaldum (strain ATCC 51547 / Ice1).